The chain runs to 245 residues: CTD nuclear envelope phosphatase 1B (245 aa).

A helical membrane pass occupies residues 7–29; the sequence is CLLGVRTFHGVTSRIWSFFLYIL. In terms of domain architecture, FCP1 homology spans 58-225; that stretch reads NNVKRKILVL…LNLLPMLDAL (168 aa).

This sequence belongs to the dullard family.

Its subcellular location is the endoplasmic reticulum membrane. The protein localises to the nucleus membrane. The enzyme catalyses O-phospho-L-seryl-[protein] + H2O = L-seryl-[protein] + phosphate. It catalyses the reaction O-phospho-L-threonyl-[protein] + H2O = L-threonyl-[protein] + phosphate. Its function is as follows. Serine/threonine protein phosphatase that may dephosphorylate and activate lipins. Lipins are phosphatidate phosphatases that catalyze the conversion of phosphatidic acid to diacylglycerol and control the metabolism of fatty acids at different levels. May indirectly modulate the lipid composition of nuclear and/or endoplasmic reticulum membranes and be required for proper nuclear membrane morphology and/or dynamics. May also indirectly regulate the production of lipid droplets and triacylglycerol. May antagonize BMP signaling. This chain is CTD nuclear envelope phosphatase 1B (ctdnep1b), found in Danio rerio (Zebrafish).